The primary structure comprises 247 residues: Orotidine 5'-phosphate decarboxylase (247 aa).

Residues D22, K44, D71–T80, T131, R192, Q201, G221, and R222 contribute to the substrate site. K73 serves as the catalytic Proton donor.

This sequence belongs to the OMP decarboxylase family. Type 1 subfamily. As to quaternary structure, homodimer.

The enzyme catalyses orotidine 5'-phosphate + H(+) = UMP + CO2. It participates in pyrimidine metabolism; UMP biosynthesis via de novo pathway; UMP from orotate: step 2/2. Functionally, catalyzes the decarboxylation of orotidine 5'-monophosphate (OMP) to uridine 5'-monophosphate (UMP). The protein is Orotidine 5'-phosphate decarboxylase of Pectobacterium atrosepticum (strain SCRI 1043 / ATCC BAA-672) (Erwinia carotovora subsp. atroseptica).